We begin with the raw amino-acid sequence, 326 residues long: Undecaprenyl-phosphate 4-deoxy-4-formamido-L-arabinose transferase (326 aa).

The next 2 membrane-spanning stretches (helical) occupy residues 236–256 (LSVVGSVIAVAGFLLAVLLIV) and 270–290 (VFTLFAILFMFIGAQFVAMGL).

The protein belongs to the glycosyltransferase 2 family.

Its subcellular location is the cell inner membrane. The catalysed reaction is UDP-4-deoxy-4-formamido-beta-L-arabinose + di-trans,octa-cis-undecaprenyl phosphate = 4-deoxy-4-formamido-alpha-L-arabinopyranosyl di-trans,octa-cis-undecaprenyl phosphate + UDP. It participates in glycolipid biosynthesis; 4-amino-4-deoxy-alpha-L-arabinose undecaprenyl phosphate biosynthesis; 4-amino-4-deoxy-alpha-L-arabinose undecaprenyl phosphate from UDP-4-deoxy-4-formamido-beta-L-arabinose and undecaprenyl phosphate: step 1/2. It functions in the pathway bacterial outer membrane biogenesis; lipopolysaccharide biosynthesis. Catalyzes the transfer of 4-deoxy-4-formamido-L-arabinose from UDP to undecaprenyl phosphate. The modified arabinose is attached to lipid A and is required for resistance to polymyxin and cationic antimicrobial peptides. This chain is Undecaprenyl-phosphate 4-deoxy-4-formamido-L-arabinose transferase, found in Proteus mirabilis (strain HI4320).